Consider the following 66-residue polypeptide: Beta-mammal toxin Co1 (66 aa).

In terms of domain architecture, LCN-type CS-alpha/beta spans 1 to 66; sequence KEGYLVNHST…VWPLPKKTCN (66 aa). 4 cysteine pairs are disulfide-bonded: C12/C65, C16/C41, C25/C46, and C29/C48.

As to expression, expressed by the venom gland.

The protein resides in the secreted. Beta toxins bind voltage-independently at site-4 of sodium channels (Nav) and shift the voltage of activation toward more negative potentials thereby affecting sodium channel activation and promoting spontaneous and repetitive firing. This toxin acts on human Nav1.6/SCN8A voltage-gated sodium channels. In vivo, is lethal to mice 40 minutes after intraperitoneal injection at a dose of 5ug. No activity is observed when injected into crickets or woodlice. The protein is Beta-mammal toxin Co1 of Centruroides ornatus (Scorpion).